The chain runs to 81 residues: UPF0180 protein YkuS (81 aa).

Belongs to the UPF0180 family.

This is UPF0180 protein YkuS (ykuS) from Bacillus subtilis (strain 168).